The sequence spans 217 residues: PTB-containing, cubilin and LRP1-interacting protein (217 aa).

Positions 60–217 (VTYLGKVSTT…ASQELESDDG (158 aa)) constitute a PID domain. Residues 194–217 (KSDGRIHRSSSSEEASQELESDDG) form a disordered region. Residues S202, S203, and S214 each carry the phosphoserine modification. Over residues 208 to 217 (ASQELESDDG) the composition is skewed to acidic residues.

As to quaternary structure, found in a complex with PID1/PCLI1, LRP1 and CUBNI. Interacts with LRP1 and CUBN.

Its subcellular location is the cytoplasm. In terms of biological role, increases proliferation of preadipocytes without affecting adipocytic differentiation. The polypeptide is PTB-containing, cubilin and LRP1-interacting protein (Pid1) (Mus musculus (Mouse)).